The primary structure comprises 414 residues: Eukaryotic initiation factor 4A-3 (414 aa).

Ala-2 is modified (N-acetylalanine). The Q motif signature appears at 41 to 69; it reads DSFDAMELQPDLLRGIYAYGFEKPSAIQQ. The Helicase ATP-binding domain maps to 72-242; the sequence is IIPFCKGLDV…RKFMNKPVRI (171 aa). An ATP-binding site is contributed by 85-92; it reads AQSGTGKT. Ser-106 carries the post-translational modification Phosphoserine. A Phosphothreonine modification is found at Thr-147. The DEAD box motif lies at 190–193; sequence DEAD. Residues 253 to 414 enclose the Helicase C-terminal domain; that stretch reads GIKQFYVNVD…ELPSNVADLL (162 aa).

Belongs to the DEAD box helicase family. eIF4A subfamily. EIF4F is a multi-subunit complex, the composition of which varies with external and internal environmental conditions. It is composed of at least EIF4A, EIF4E and EIF4G.

The protein resides in the cytoplasm. It catalyses the reaction ATP + H2O = ADP + phosphate + H(+). Functionally, ATP-dependent RNA helicase which is a subunit of the eIF4F complex involved in cap recognition and is required for mRNA binding to ribosome. In the current model of translation initiation, eIF4A unwinds RNA secondary structures in the 5'-UTR of mRNAs which is necessary to allow efficient binding of the small ribosomal subunit, and subsequent scanning for the initiator codon. The chain is Eukaryotic initiation factor 4A-3 (TIF4A-3) from Arabidopsis thaliana (Mouse-ear cress).